We begin with the raw amino-acid sequence, 200 residues long: ATP-dependent Clp protease proteolytic subunit (200 aa).

The active-site Nucleophile is the Ser-102. The active site involves His-127.

This sequence belongs to the peptidase S14 family. Fourteen ClpP subunits assemble into 2 heptameric rings which stack back to back to give a disk-like structure with a central cavity, resembling the structure of eukaryotic proteasomes.

Its subcellular location is the cytoplasm. The enzyme catalyses Hydrolysis of proteins to small peptides in the presence of ATP and magnesium. alpha-casein is the usual test substrate. In the absence of ATP, only oligopeptides shorter than five residues are hydrolyzed (such as succinyl-Leu-Tyr-|-NHMec, and Leu-Tyr-Leu-|-Tyr-Trp, in which cleavage of the -Tyr-|-Leu- and -Tyr-|-Trp bonds also occurs).. In terms of biological role, cleaves peptides in various proteins in a process that requires ATP hydrolysis. Has a chymotrypsin-like activity. Plays a major role in the degradation of misfolded proteins. The polypeptide is ATP-dependent Clp protease proteolytic subunit (Dehalococcoides mccartyi (strain ATCC BAA-2266 / KCTC 15142 / 195) (Dehalococcoides ethenogenes (strain 195))).